Consider the following 253-residue polypeptide: Indole-3-glycerol phosphate synthase (253 aa).

The protein belongs to the TrpC family.

The enzyme catalyses 1-(2-carboxyphenylamino)-1-deoxy-D-ribulose 5-phosphate + H(+) = (1S,2R)-1-C-(indol-3-yl)glycerol 3-phosphate + CO2 + H2O. Its pathway is amino-acid biosynthesis; L-tryptophan biosynthesis; L-tryptophan from chorismate: step 4/5. This is Indole-3-glycerol phosphate synthase from Bacillus cereus (strain AH187).